A 186-amino-acid polypeptide reads, in one-letter code: Ribosome-recycling factor (186 aa).

It belongs to the RRF family.

It is found in the cytoplasm. In terms of biological role, responsible for the release of ribosomes from messenger RNA at the termination of protein biosynthesis. May increase the efficiency of translation by recycling ribosomes from one round of translation to another. The protein is Ribosome-recycling factor of Bacteroides fragilis (strain ATCC 25285 / DSM 2151 / CCUG 4856 / JCM 11019 / LMG 10263 / NCTC 9343 / Onslow / VPI 2553 / EN-2).